The primary structure comprises 74 residues: MLQKKIEEEAAKYKYAMLKKCCYDGAYRNDDETCEERAARIKIGPKCVKAFKDCCYIANQVRAEQSHKNIQLGR.

Positions 15-44 (YAMLKKCCYDGAYRNDDETCEERAARIKIG) are involved in C5AR1 binding. Cystine bridges form between Cys-21/Cys-47, Cys-22/Cys-54, and Cys-34/Cys-55. One can recognise an Anaphylatoxin-like domain in the interval 21 to 55 (CCYDGAYRNDDETCEERAARIKIGPKCVKAFKDCC). Residues 72 to 74 (LGR) are required for 90% of C5a activity; although Arg-74 is not essential.

The protein localises to the secreted. Functionally, mediator of local inflammatory process released following cleavage by C5 convertase. Acts by binding to its receptor (C5AR1 or C5AR2), activating G protein-coupled receptor signaling and inducing a variety of responses including intracellular calcium release, contraction of smooth muscle, increased vascular permeability, and histamine release from mast cells and basophilic leukocytes. C5a is also a potent chemokine which stimulates the locomotion of polymorphonuclear leukocytes and directs their migration toward sites of inflammation. This is Complement C5a anaphylatoxin (C5) from Sus scrofa (Pig).